Here is a 450-residue protein sequence, read N- to C-terminus: 3-phosphoshikimate 1-carboxyvinyltransferase (450 aa).

Residues lysine 23, serine 24, and arginine 28 each contribute to the 3-phosphoshikimate site. Lysine 23 contacts phosphoenolpyruvate. Phosphoenolpyruvate contacts are provided by glycine 96 and arginine 124. Residues serine 167, serine 168, glutamine 169, serine 196, glutamate 311, and histidine 340 each coordinate 3-phosphoshikimate. Glutamine 169 lines the phosphoenolpyruvate pocket. Residue glutamate 311 is the Proton acceptor of the active site. 3 residues coordinate phosphoenolpyruvate: arginine 344, arginine 385, and lysine 410. Residues 426-450 (GQGWGYPQPRSGQRARRATGQGSGG) are disordered.

The protein belongs to the EPSP synthase family. As to quaternary structure, monomer.

It is found in the cytoplasm. The catalysed reaction is 3-phosphoshikimate + phosphoenolpyruvate = 5-O-(1-carboxyvinyl)-3-phosphoshikimate + phosphate. It participates in metabolic intermediate biosynthesis; chorismate biosynthesis; chorismate from D-erythrose 4-phosphate and phosphoenolpyruvate: step 6/7. In terms of biological role, catalyzes the transfer of the enolpyruvyl moiety of phosphoenolpyruvate (PEP) to the 5-hydroxyl of shikimate-3-phosphate (S3P) to produce enolpyruvyl shikimate-3-phosphate and inorganic phosphate. This chain is 3-phosphoshikimate 1-carboxyvinyltransferase, found in Mycobacterium bovis (strain ATCC BAA-935 / AF2122/97).